Reading from the N-terminus, the 485-residue chain is Glutamyl-tRNA(Gln) amidotransferase subunit A (485 aa).

Catalysis depends on charge relay system residues Lys76 and Ser151. The active-site Acyl-ester intermediate is Ser175.

It belongs to the amidase family. GatA subfamily. As to quaternary structure, heterotrimer of A, B and C subunits.

The enzyme catalyses L-glutamyl-tRNA(Gln) + L-glutamine + ATP + H2O = L-glutaminyl-tRNA(Gln) + L-glutamate + ADP + phosphate + H(+). Allows the formation of correctly charged Gln-tRNA(Gln) through the transamidation of misacylated Glu-tRNA(Gln) in organisms which lack glutaminyl-tRNA synthetase. The reaction takes place in the presence of glutamine and ATP through an activated gamma-phospho-Glu-tRNA(Gln). The polypeptide is Glutamyl-tRNA(Gln) amidotransferase subunit A (Chlorobium luteolum (strain DSM 273 / BCRC 81028 / 2530) (Pelodictyon luteolum)).